A 159-amino-acid polypeptide reads, in one-letter code: ATP synthase subunit b (159 aa).

Residues 4-24 (VGINGTLIVQLVTFVILVALL) form a helical membrane-spanning segment.

This sequence belongs to the ATPase B chain family. F-type ATPases have 2 components, F(1) - the catalytic core - and F(0) - the membrane proton channel. F(1) has five subunits: alpha(3), beta(3), gamma(1), delta(1), epsilon(1). F(0) has three main subunits: a(1), b(2) and c(10-14). The alpha and beta chains form an alternating ring which encloses part of the gamma chain. F(1) is attached to F(0) by a central stalk formed by the gamma and epsilon chains, while a peripheral stalk is formed by the delta and b chains.

The protein localises to the cell inner membrane. In terms of biological role, f(1)F(0) ATP synthase produces ATP from ADP in the presence of a proton or sodium gradient. F-type ATPases consist of two structural domains, F(1) containing the extramembraneous catalytic core and F(0) containing the membrane proton channel, linked together by a central stalk and a peripheral stalk. During catalysis, ATP synthesis in the catalytic domain of F(1) is coupled via a rotary mechanism of the central stalk subunits to proton translocation. Component of the F(0) channel, it forms part of the peripheral stalk, linking F(1) to F(0). In Acidithiobacillus ferridurans, this protein is ATP synthase subunit b.